The following is a 236-amino-acid chain: Small ribosomal subunit protein eS6 (236 aa).

Phosphoserine is present on residues S232 and S233.

The protein belongs to the eukaryotic ribosomal protein eS6 family. In terms of processing, phosphorylated.

The polypeptide is Small ribosomal subunit protein eS6 (RPS6) (Debaryomyces hansenii (strain ATCC 36239 / CBS 767 / BCRC 21394 / JCM 1990 / NBRC 0083 / IGC 2968) (Yeast)).